Reading from the N-terminus, the 276-residue chain is Rhomboid protease GlpG (276 aa).

The next 6 membrane-spanning stretches (helical) occupy residues 94–114 (GPVT…MQIL), 142–162 (ALMH…WYLG), 169–189 (LGSG…GYVQ), 192–212 (FSGP…GYVW), 229–249 (LIIF…GMSM), and 250–270 (ANGA…VDSL). Ser-201 functions as the Nucleophile in the catalytic mechanism. His-254 is a catalytic residue.

It belongs to the peptidase S54 family.

The protein resides in the cell inner membrane. The enzyme catalyses Cleaves type-1 transmembrane domains using a catalytic dyad composed of serine and histidine that are contributed by different transmembrane domains.. Its function is as follows. Rhomboid-type serine protease that catalyzes intramembrane proteolysis. The chain is Rhomboid protease GlpG from Escherichia coli O157:H7.